The following is a 428-amino-acid chain: Histidine--tRNA ligase (428 aa).

Belongs to the class-II aminoacyl-tRNA synthetase family.

It localises to the cytoplasm. The catalysed reaction is tRNA(His) + L-histidine + ATP = L-histidyl-tRNA(His) + AMP + diphosphate + H(+). In Sulfolobus acidocaldarius (strain ATCC 33909 / DSM 639 / JCM 8929 / NBRC 15157 / NCIMB 11770), this protein is Histidine--tRNA ligase.